Consider the following 330-residue polypeptide: Probable cell division protein WhiA (330 aa).

Positions serine 275–glutamate 308 form a DNA-binding region, H-T-H motif.

Belongs to the WhiA family.

In terms of biological role, involved in cell division and chromosome segregation. In Kocuria rhizophila (strain ATCC 9341 / DSM 348 / NBRC 103217 / DC2201), this protein is Probable cell division protein WhiA.